The sequence spans 360 residues: C-C chemokine receptor type 4 (360 aa).

Residues Met1–Glu39 lie on the Extracellular side of the membrane. Asn2 carries an N-linked (GlcNAc...) asparagine glycan. The chain crosses the membrane as a helical span at residues Val40–Tyr67. Over Lys68–Tyr77 the chain is Cytoplasmic. A helical membrane pass occupies residues Leu78–Tyr98. At Ala99–Lys111 the chain is on the extracellular side. Cys110 and Cys187 are disulfide-bonded. The helical transmembrane segment at Ile112 to Ile133 threads the bilayer. At Asp134–Thr150 the chain is on the cytoplasmic side. Residues Leu151 to Phe175 form a helical membrane-spanning segment. Over Ser176–Ile206 the chain is Extracellular. N-linked (GlcNAc...) asparagine glycans are attached at residues Asn183 and Asn194. Residues Asn207–Ile226 form a helical membrane-spanning segment. At Arg227–Arg242 the chain is on the cytoplasmic side. Residues Met243–Leu267 traverse the membrane as a helical segment. At Val268–Tyr284 the chain is on the extracellular side. Residues Ala285–Gly308 traverse the membrane as a helical segment. Residues Glu309–Leu360 are Cytoplasmic-facing.

It belongs to the G-protein coupled receptor 1 family. In terms of processing, in natural killer cells, CCL22 binding induces phosphorylation on yet undefined Ser/Thr residues, most probably by beta-adrenergic receptor kinases 1 and 2. As to expression, expressed in the thymus, macrophages and T- and B-cells.

Its subcellular location is the cell membrane. In terms of biological role, high affinity receptor for the C-C type chemokines CCL17/TARC and CCL22/MDC. The activity of this receptor is mediated by G(i) proteins which activate a phosphatidylinositol-calcium second messenger system. Could play a role in lipopolysaccharide (LPS)-induced endotoxic shock. In the CNS, could mediate hippocampal-neuron survival. The chain is C-C chemokine receptor type 4 (Ccr4) from Mus musculus (Mouse).